A 177-amino-acid chain; its full sequence is ATP synthase subunit delta (177 aa).

This sequence belongs to the ATPase delta chain family. In terms of assembly, F-type ATPases have 2 components, F(1) - the catalytic core - and F(0) - the membrane proton channel. F(1) has five subunits: alpha(3), beta(3), gamma(1), delta(1), epsilon(1). F(0) has three main subunits: a(1), b(2) and c(10-14). The alpha and beta chains form an alternating ring which encloses part of the gamma chain. F(1) is attached to F(0) by a central stalk formed by the gamma and epsilon chains, while a peripheral stalk is formed by the delta and b chains.

The protein localises to the cell inner membrane. Functionally, f(1)F(0) ATP synthase produces ATP from ADP in the presence of a proton or sodium gradient. F-type ATPases consist of two structural domains, F(1) containing the extramembraneous catalytic core and F(0) containing the membrane proton channel, linked together by a central stalk and a peripheral stalk. During catalysis, ATP synthesis in the catalytic domain of F(1) is coupled via a rotary mechanism of the central stalk subunits to proton translocation. In terms of biological role, this protein is part of the stalk that links CF(0) to CF(1). It either transmits conformational changes from CF(0) to CF(1) or is implicated in proton conduction. The polypeptide is ATP synthase subunit delta (Aeromonas hydrophila subsp. hydrophila (strain ATCC 7966 / DSM 30187 / BCRC 13018 / CCUG 14551 / JCM 1027 / KCTC 2358 / NCIMB 9240 / NCTC 8049)).